Reading from the N-terminus, the 279-residue chain is Malonyl-[acyl-carrier protein] O-methyltransferase (279 aa).

It belongs to the methyltransferase superfamily.

The catalysed reaction is malonyl-[ACP] + S-adenosyl-L-methionine = malonyl-[ACP] methyl ester + S-adenosyl-L-homocysteine. It functions in the pathway cofactor biosynthesis; biotin biosynthesis. In terms of biological role, converts the free carboxyl group of a malonyl-thioester to its methyl ester by transfer of a methyl group from S-adenosyl-L-methionine (SAM). It allows to synthesize pimeloyl-ACP via the fatty acid synthetic pathway. The protein is Malonyl-[acyl-carrier protein] O-methyltransferase of Hahella chejuensis (strain KCTC 2396).